We begin with the raw amino-acid sequence, 255 residues long: MNPIKPPFTLNQYFAAWFVHVFTASAACIGVFSLYKIYQHDYVFALWLMAITVFIDAVDGSLARLVHVKSVLPKIDGALLDNIVDYLNYVITPCFFLLVKPGMLPADYVVPITAAITITSAYQFCQDDAKTPDHFFKGFPCYWNITVFYMYIFNTSMIVNTVLLSLFCVLIFIPVKYVYPSRLDYLTESRVLKILMHCCSALYGISSFCLLVNYPETNKLWVSLSLGYVGMYLFLSFYRTYYPMFKAKITANNKD.

The Cytoplasmic portion of the chain corresponds to 1 to 13 (MNPIKPPFTLNQY). The chain crosses the membrane as a helical span at residues 14–34 (FAAWFVHVFTASAACIGVFSL). Over 35 to 42 (YKIYQHDY) the chain is Periplasmic. The chain crosses the membrane as a helical span at residues 43-63 (VFALWLMAITVFIDAVDGSLA). The Cytoplasmic segment spans residues 64–76 (RLVHVKSVLPKID). The chain crosses the membrane as a helical span at residues 77 to 97 (GALLDNIVDYLNYVITPCFFL). Residues 98-103 (LVKPGM) are Periplasmic-facing. The helical transmembrane segment at 104-124 (LPADYVVPITAAITITSAYQF) threads the bilayer. At 125-133 (CQDDAKTPD) the chain is on the cytoplasmic side. Residues 134–154 (HFFKGFPCYWNITVFYMYIFN) traverse the membrane as a helical segment. Thr-155 is a topological domain (periplasmic). A helical transmembrane segment spans residues 156 to 175 (SMIVNTVLLSLFCVLIFIPV). At 176 to 190 (KYVYPSRLDYLTESR) the chain is on the cytoplasmic side. Residues 191-211 (VLKILMHCCSALYGISSFCLL) traverse the membrane as a helical segment. Residues 212–217 (VNYPET) lie on the Periplasmic side of the membrane. The chain crosses the membrane as a helical span at residues 218-238 (NKLWVSLSLGYVGMYLFLSFY). The Cytoplasmic segment spans residues 239 to 255 (RTYYPMFKAKITANNKD).

This sequence belongs to the CDP-alcohol phosphatidyltransferase class-I family. Mn(2+) serves as cofactor.

Its subcellular location is the cell inner membrane. It carries out the reaction a CDP-1,2-diacyl-sn-glycerol + choline = a 1,2-diacyl-sn-glycero-3-phosphocholine + CMP + H(+). Functionally, condenses choline with CDP-diglyceride to produce phosphatidylcholine and CMP. Affects virulence of this bacterium when there is a complete loss of phosphatidylcholine formation due to absence of both the synthase (pcs) and the methylation (pmtA) pathways. Reduced virulence results from lowered yields of bacteria within host macrophages and because of loss of high multiplicity cytotoxicity. The sequence is that of Phosphatidylcholine synthase from Legionella pneumophila subsp. pneumophila (strain Philadelphia 1 / ATCC 33152 / DSM 7513).